A 261-amino-acid chain; its full sequence is Proteasome subunit alpha type-4 (261 aa).

Phosphoserine is present on residues S13 and S75. K127 bears the N6-acetyllysine mark. Residue S173 is modified to Phosphoserine. Residue K176 is modified to N6-acetyllysine. Positions 240 to 261 are disordered; that stretch reads HEEEEAKAEREKKEKEQREKDK.

Belongs to the peptidase T1A family. As to quaternary structure, the 26S proteasome consists of a 20S proteasome core and two 19S regulatory subunits. The 20S proteasome core is a barrel-shaped complex made of 28 subunits that are arranged in four stacked rings. The two outer rings are each formed by seven alpha subunits, and the two inner rings are formed by seven beta subunits. The proteolytic activity is exerted by three beta-subunits PSMB5, PSMB6 and PSMB7. Ubiquitous.

The protein localises to the cytoplasm. It localises to the nucleus. Functionally, component of the 20S core proteasome complex involved in the proteolytic degradation of most intracellular proteins. This complex plays numerous essential roles within the cell by associating with different regulatory particles. Associated with two 19S regulatory particles, forms the 26S proteasome and thus participates in the ATP-dependent degradation of ubiquitinated proteins. The 26S proteasome plays a key role in the maintenance of protein homeostasis by removing misfolded or damaged proteins that could impair cellular functions, and by removing proteins whose functions are no longer required. Associated with the PA200 or PA28, the 20S proteasome mediates ubiquitin-independent protein degradation. This type of proteolysis is required in several pathways including spermatogenesis (20S-PA200 complex) or generation of a subset of MHC class I-presented antigenic peptides (20S-PA28 complex). In Rattus norvegicus (Rat), this protein is Proteasome subunit alpha type-4 (Psma4).